A 782-amino-acid polypeptide reads, in one-letter code: Phosphoribosylformylglycinamidine synthase subunit PurL (782 aa).

The active site involves histidine 48. Residues tyrosine 51 and lysine 90 each coordinate ATP. Glutamate 92 is a binding site for Mg(2+). Substrate contacts are provided by residues 93–96 (SHNH) and arginine 115. Residue histidine 94 is the Proton acceptor of the active site. Mg(2+) is bound at residue aspartate 116. A substrate-binding site is contributed by glutamine 239. Aspartate 267 is a binding site for Mg(2+). Position 311-313 (311-313 (ESQ)) interacts with substrate. Residues aspartate 525 and glycine 562 each contribute to the ATP site. Residue asparagine 563 coordinates Mg(2+). A substrate-binding site is contributed by serine 565.

The protein belongs to the FGAMS family. Monomer. Part of the FGAM synthase complex composed of 1 PurL, 1 PurQ and 2 PurS subunits.

It localises to the cytoplasm. The catalysed reaction is N(2)-formyl-N(1)-(5-phospho-beta-D-ribosyl)glycinamide + L-glutamine + ATP + H2O = 2-formamido-N(1)-(5-O-phospho-beta-D-ribosyl)acetamidine + L-glutamate + ADP + phosphate + H(+). The protein operates within purine metabolism; IMP biosynthesis via de novo pathway; 5-amino-1-(5-phospho-D-ribosyl)imidazole from N(2)-formyl-N(1)-(5-phospho-D-ribosyl)glycinamide: step 1/2. Its function is as follows. Part of the phosphoribosylformylglycinamidine synthase complex involved in the purines biosynthetic pathway. Catalyzes the ATP-dependent conversion of formylglycinamide ribonucleotide (FGAR) and glutamine to yield formylglycinamidine ribonucleotide (FGAM) and glutamate. The FGAM synthase complex is composed of three subunits. PurQ produces an ammonia molecule by converting glutamine to glutamate. PurL transfers the ammonia molecule to FGAR to form FGAM in an ATP-dependent manner. PurS interacts with PurQ and PurL and is thought to assist in the transfer of the ammonia molecule from PurQ to PurL. The chain is Phosphoribosylformylglycinamidine synthase subunit PurL from Nostoc sp. (strain PCC 7120 / SAG 25.82 / UTEX 2576).